The primary structure comprises 76 residues: Cytochrome c oxidase subunit 6C-1 (76 aa).

At 2–10 (SLAKPAMRG) the chain is on the mitochondrial matrix side. The helical transmembrane segment at 11–51 (LLGKRLRFHLPIAFTLSLVAALGFKYGVTEPRKQAYADFYK) threads the bilayer. Residues 52–76 (QYDAVKDFNAMREAGIFESVRPSGE) are Mitochondrial intermembrane-facing.

It belongs to the cytochrome c oxidase subunit 6c family. In terms of assembly, component of the cytochrome c oxidase (complex IV, CIV), a multisubunit enzyme composed of 14 subunits. The complex is composed of a catalytic core of 3 subunits MT-CO1, MT-CO2 and MT-CO3, encoded in the mitochondrial DNA, and 11 supernumerary subunits COX4I, COX5A, COX5B, COX6A, COX6B, COX6C, COX7A, COX7B, COX7C, COX8 and NDUFA4, which are encoded in the nuclear genome. The complex exists as a monomer or a dimer and forms supercomplexes (SCs) in the inner mitochondrial membrane with NADH-ubiquinone oxidoreductase (complex I, CI) and ubiquinol-cytochrome c oxidoreductase (cytochrome b-c1 complex, complex III, CIII), resulting in different assemblies (supercomplex SCI(1)III(2)IV(1) and megacomplex MCI(2)III(2)IV(2)).

It is found in the mitochondrion inner membrane. It functions in the pathway energy metabolism; oxidative phosphorylation. Functionally, component of the cytochrome c oxidase, the last enzyme in the mitochondrial electron transport chain which drives oxidative phosphorylation. The respiratory chain contains 3 multisubunit complexes succinate dehydrogenase (complex II, CII), ubiquinol-cytochrome c oxidoreductase (cytochrome b-c1 complex, complex III, CIII) and cytochrome c oxidase (complex IV, CIV), that cooperate to transfer electrons derived from NADH and succinate to molecular oxygen, creating an electrochemical gradient over the inner membrane that drives transmembrane transport and the ATP synthase. Cytochrome c oxidase is the component of the respiratory chain that catalyzes the reduction of oxygen to water. Electrons originating from reduced cytochrome c in the intermembrane space (IMS) are transferred via the dinuclear copper A center (CU(A)) of subunit 2 and heme A of subunit 1 to the active site in subunit 1, a binuclear center (BNC) formed by heme A3 and copper B (CU(B)). The BNC reduces molecular oxygen to 2 water molecules using 4 electrons from cytochrome c in the IMS and 4 protons from the mitochondrial matrix. The protein is Cytochrome c oxidase subunit 6C-1 of Thunnus obesus (Bigeye tuna).